We begin with the raw amino-acid sequence, 196 residues long: Pyridoxal 5'-phosphate synthase subunit PdxT (196 aa).

47–49 (GES) lines the L-glutamine pocket. C79 acts as the Nucleophile in catalysis. Residues R106 and 134–135 (IR) each bind L-glutamine. Catalysis depends on charge relay system residues H170 and E172.

It belongs to the glutaminase PdxT/SNO family. In the presence of PdxS, forms a dodecamer of heterodimers. Only shows activity in the heterodimer.

It catalyses the reaction aldehydo-D-ribose 5-phosphate + D-glyceraldehyde 3-phosphate + L-glutamine = pyridoxal 5'-phosphate + L-glutamate + phosphate + 3 H2O + H(+). The catalysed reaction is L-glutamine + H2O = L-glutamate + NH4(+). The protein operates within cofactor biosynthesis; pyridoxal 5'-phosphate biosynthesis. Catalyzes the hydrolysis of glutamine to glutamate and ammonia as part of the biosynthesis of pyridoxal 5'-phosphate. The resulting ammonia molecule is channeled to the active site of PdxS. This chain is Pyridoxal 5'-phosphate synthase subunit PdxT, found in Bacillus licheniformis (strain ATCC 14580 / DSM 13 / JCM 2505 / CCUG 7422 / NBRC 12200 / NCIMB 9375 / NCTC 10341 / NRRL NRS-1264 / Gibson 46).